The following is a 230-amino-acid chain: MSVRILVVDDDRAVRESLRRSLSFNGYSVELAHDGVEALDMIASDRPDALVLDVMMPRLDGLEVCRQLRGTGDDLPILVLTARDSVSERVAGLDAGADDYLPKPFALEELLARMRALLRRTKPEDAAESMAMRFSDLTLDPVTREVNRGQRRISLTRTEFALLEMLIANPRRVLTRSRILEEVWGFDFPTSGNALEVYVGYLRRKTEADGEPRLIHTVRGVGYVLRETPP.

The region spanning 4–118 (RILVVDDDRA…ELLARMRALL (115 aa)) is the Response regulatory domain. Position 48 is a 4-aspartylphosphate (D48). Positions 129 to 227 (SMAMRFSDLT…VRGVGYVLRE (99 aa)) form a DNA-binding region, ompR/PhoB-type.

Phosphorylated and dephosphorylated by MprB.

It localises to the cytoplasm. Functionally, member of the two-component regulatory system MprB/MprA which contributes to maintaining a balance among several systems involved in stress resistance and is required for establishment and maintenance of persistent infection in the host. Functions as a transcriptional regulator that recognizes a 19-bp nucleotide motif comprizing two loosely conserved 8-bp direct DNA-binding motif repeats separated by a 3-bp spacer region. The polypeptide is Response regulator MprA (mprA) (Mycobacterium tuberculosis (strain ATCC 25177 / H37Ra)).